We begin with the raw amino-acid sequence, 881 residues long: Alanine--tRNA ligase (881 aa).

Zn(2+) contacts are provided by His-568, His-572, Cys-670, and His-674.

The protein belongs to the class-II aminoacyl-tRNA synthetase family. Zn(2+) serves as cofactor.

Its subcellular location is the cytoplasm. It catalyses the reaction tRNA(Ala) + L-alanine + ATP = L-alanyl-tRNA(Ala) + AMP + diphosphate. Functionally, catalyzes the attachment of alanine to tRNA(Ala) in a two-step reaction: alanine is first activated by ATP to form Ala-AMP and then transferred to the acceptor end of tRNA(Ala). Also edits incorrectly charged Ser-tRNA(Ala) and Gly-tRNA(Ala) via its editing domain. The sequence is that of Alanine--tRNA ligase from Clostridium acetobutylicum (strain ATCC 824 / DSM 792 / JCM 1419 / IAM 19013 / LMG 5710 / NBRC 13948 / NRRL B-527 / VKM B-1787 / 2291 / W).